The sequence spans 246 residues: DNA repair protein RecO (246 aa).

It belongs to the RecO family.

Functionally, involved in DNA repair and RecF pathway recombination. This is DNA repair protein RecO from Nitrosococcus oceani (strain ATCC 19707 / BCRC 17464 / JCM 30415 / NCIMB 11848 / C-107).